The chain runs to 108 residues: Replication restart protein PriB (108 aa).

Residues 8–108 enclose the SSB domain; it reads VDNRFSLIGK…LHAEQIEFIE (101 aa).

The protein belongs to the PriB family. As to quaternary structure, homodimer. Interacts with PriA and DnaT. Component of the replication restart primosome. Primosome assembly occurs via a 'hand-off' mechanism. PriA binds to replication forks, subsequently PriB then DnaT bind; DnaT then displaces ssDNA to generate the helicase loading substrate.

Its function is as follows. Involved in the restart of stalled replication forks, which reloads the replicative helicase on sites other than the origin of replication; the PriA-PriB pathway is the major replication restart pathway. During primosome assembly it facilitates complex formation between PriA and DnaT on DNA; stabilizes PriA on DNA. Stimulates the DNA unwinding activity of PriA helicase. This chain is Replication restart protein PriB, found in Histophilus somni (strain 129Pt) (Haemophilus somnus).